Here is a 394-residue protein sequence, read N- to C-terminus: Phosphopentomutase (394 aa).

Mn(2+) is bound by residues D15, D288, H293, D329, H330, and H341.

This sequence belongs to the phosphopentomutase family. It depends on Mn(2+) as a cofactor.

The protein localises to the cytoplasm. The catalysed reaction is 2-deoxy-alpha-D-ribose 1-phosphate = 2-deoxy-D-ribose 5-phosphate. The enzyme catalyses alpha-D-ribose 1-phosphate = D-ribose 5-phosphate. Its pathway is carbohydrate degradation; 2-deoxy-D-ribose 1-phosphate degradation; D-glyceraldehyde 3-phosphate and acetaldehyde from 2-deoxy-alpha-D-ribose 1-phosphate: step 1/2. In terms of biological role, isomerase that catalyzes the conversion of deoxy-ribose 1-phosphate (dRib-1-P) and ribose 1-phosphate (Rib-1-P) to deoxy-ribose 5-phosphate (dRib-5-P) and ribose 5-phosphate (Rib-5-P), respectively. This is Phosphopentomutase (drm) from Bacillus subtilis (strain 168).